The chain runs to 338 residues: Cytoskeleton protein RodZ (338 aa).

Topologically, residues 1-111 (MNTEATHDQN…LGKRRKKRDG (111 aa)) are cytoplasmic. In terms of domain architecture, HTH cro/C1-type spans 19-71 (LRNAREQLGLSQQAVAERLCLKVSTVRDIEEDKAPADLASTFLRGYIRSYARL). Positions 30-49 (QQAVAERLCLKVSTVRDIEE) form a DNA-binding region, H-T-H motif. A helical; Signal-anchor for type II membrane protein membrane pass occupies residues 112–132 (WLMTFTWLVLFVVIGLSGAWW). At 133 to 338 (WQDHKAQQEE…TLNAEQSPAQ (206 aa)) the chain is on the periplasmic side. Residues 155–169 (NANGTNSQSIPLENS) show a composition bias toward polar residues. A disordered region spans residues 155–240 (NANGTNSQSI…TTPDTATPLP (86 aa)). Positions 170–188 (TTTVPEATPAPAAPVDTTA) are enriched in low complexity. A compositionally biased stretch (polar residues) spans 203 to 217 (EPQQNAVVPPSQANV). Positions 218–240 (DTATTAPAAPATTTTPDTATPLP) are enriched in low complexity.

It belongs to the RodZ family.

Its subcellular location is the cell inner membrane. Cytoskeletal protein that is involved in cell-shape control through regulation of the length of the long axis. This is Cytoskeleton protein RodZ from Escherichia fergusonii (strain ATCC 35469 / DSM 13698 / CCUG 18766 / IAM 14443 / JCM 21226 / LMG 7866 / NBRC 102419 / NCTC 12128 / CDC 0568-73).